The sequence spans 220 residues: Small ribosomal subunit protein eS8 (220 aa).

Belongs to the eukaryotic ribosomal protein eS8 family.

The chain is Small ribosomal subunit protein eS8 (RPS8A) from Leishmania major.